Consider the following 293-residue polypeptide: Ribosomal protein L11 methyltransferase (293 aa).

Residues threonine 145, glycine 166, aspartate 188, and asparagine 230 each coordinate S-adenosyl-L-methionine.

The protein belongs to the methyltransferase superfamily. PrmA family.

It localises to the cytoplasm. The enzyme catalyses L-lysyl-[protein] + 3 S-adenosyl-L-methionine = N(6),N(6),N(6)-trimethyl-L-lysyl-[protein] + 3 S-adenosyl-L-homocysteine + 3 H(+). Functionally, methylates ribosomal protein L11. The chain is Ribosomal protein L11 methyltransferase from Shewanella baltica (strain OS195).